A 122-amino-acid polypeptide reads, in one-letter code: Small ribosomal subunit protein uS13 (122 aa).

A disordered region spans residues 95 to 122 (GLPVRGQRTHTNARTRKGPAKSIAGKKK).

Belongs to the universal ribosomal protein uS13 family. Part of the 30S ribosomal subunit. Forms a loose heterodimer with protein S19. Forms two bridges to the 50S subunit in the 70S ribosome.

Located at the top of the head of the 30S subunit, it contacts several helices of the 16S rRNA. In the 70S ribosome it contacts the 23S rRNA (bridge B1a) and protein L5 of the 50S subunit (bridge B1b), connecting the 2 subunits; these bridges are implicated in subunit movement. Contacts the tRNAs in the A and P-sites. In Nitrobacter hamburgensis (strain DSM 10229 / NCIMB 13809 / X14), this protein is Small ribosomal subunit protein uS13.